Here is a 347-residue protein sequence, read N- to C-terminus: MNPLTLIIIMFTLFMGTMITVFSSHWLTMWIGLEMNMLAIIPILINKATPRSTEAATKYFLTQATASMILMMAITLNILDSGQWTLINPQNQLTPVLITLALIIKLGMAPFHFWVPEVTQGVPLKSGLILLTWQKLAPLSILYQISPSINPTMMMSVAILSIMVGGWGGLNQTQLRKILAYSSIAHMGWMAAIITFNPNTMVLNLIIYILMTIPMFMMFMQHSSTTTLSLSQMWNKNPLMVSTILITLMSLGGLPPLTGFIPKWIIIQELTKNGNIILPTAMAMLALLNLYFYMRLIYSSSLTMFPTTNNLKMKWQFESTKRMPLITPLIILSTMLLPLTPALSVLN.

The next 10 membrane-spanning stretches (helical) occupy residues 3–23 (PLTL…TVFS), 59–79 (YFLT…LNIL), 95–115 (PVLI…HFWV), 127–147 (GLIL…QISP), 149–169 (INPT…GWGG), 178–198 (ILAY…TFNP), 200–220 (TMVL…MMFM), 241–261 (VSTI…TGFI), 274–294 (GNII…YFYM), and 325–345 (LITP…ALSV).

It belongs to the complex I subunit 2 family. Core subunit of respiratory chain NADH dehydrogenase (Complex I) which is composed of 45 different subunits. Interacts with TMEM242.

Its subcellular location is the mitochondrion inner membrane. It catalyses the reaction a ubiquinone + NADH + 5 H(+)(in) = a ubiquinol + NAD(+) + 4 H(+)(out). Functionally, core subunit of the mitochondrial membrane respiratory chain NADH dehydrogenase (Complex I) which catalyzes electron transfer from NADH through the respiratory chain, using ubiquinone as an electron acceptor. Essential for the catalytic activity and assembly of complex I. This is NADH-ubiquinone oxidoreductase chain 2 from Oryctolagus cuniculus (Rabbit).